The following is a 166-amino-acid chain: Antibacterial peptide PMAP-36 (166 aa).

Positions 1–29 are cleaved as a signal peptide; that stretch reads METQRASLCLGRWSLWLLLLGLVVPSASA. The propeptide occupies 30–129; the sequence is QALSYREAVL…LDINCDEIQS (100 aa). Disulfide bonds link C85-C96 and C107-C124.

It belongs to the cathelicidin family.

It localises to the secreted. In terms of biological role, exerts antimicrobial activity against both Gram-positive and negative bacteria. Its activity appears to be mediated by its ability to damage bacterial membranes. The protein is Antibacterial peptide PMAP-36 (PMAP36) of Sus scrofa (Pig).